Here is a 446-residue protein sequence, read N- to C-terminus: Glutamyl-tRNA reductase (446 aa).

Residues 49–52 (TCNR), Ser109, 114–116 (ETQ), and Gln120 contribute to the substrate site. Cys50 acts as the Nucleophile in catalysis. 189 to 194 (GAGKMG) contributes to the NADP(+) binding site.

The protein belongs to the glutamyl-tRNA reductase family. Homodimer.

The enzyme catalyses (S)-4-amino-5-oxopentanoate + tRNA(Glu) + NADP(+) = L-glutamyl-tRNA(Glu) + NADPH + H(+). It functions in the pathway porphyrin-containing compound metabolism; protoporphyrin-IX biosynthesis; 5-aminolevulinate from L-glutamyl-tRNA(Glu): step 1/2. Its function is as follows. Catalyzes the NADPH-dependent reduction of glutamyl-tRNA(Glu) to glutamate 1-semialdehyde (GSA). In Priestia megaterium (Bacillus megaterium), this protein is Glutamyl-tRNA reductase.